We begin with the raw amino-acid sequence, 316 residues long: Transaldolase (316 aa).

Lys-131 functions as the Schiff-base intermediate with substrate in the catalytic mechanism.

This sequence belongs to the transaldolase family. Type 1 subfamily. Homodimer.

The protein resides in the cytoplasm. It carries out the reaction D-sedoheptulose 7-phosphate + D-glyceraldehyde 3-phosphate = D-erythrose 4-phosphate + beta-D-fructose 6-phosphate. It participates in carbohydrate degradation; pentose phosphate pathway; D-glyceraldehyde 3-phosphate and beta-D-fructose 6-phosphate from D-ribose 5-phosphate and D-xylulose 5-phosphate (non-oxidative stage): step 2/3. Its function is as follows. Transaldolase is important for the balance of metabolites in the pentose-phosphate pathway. The chain is Transaldolase from Sodalis glossinidius (strain morsitans).